We begin with the raw amino-acid sequence, 155 residues long: UPF0266 membrane protein lin0773 (155 aa).

Helical transmembrane passes span 8–28 (IFLF…DAVI), 46–66 (RWDG…NTFF), and 70–90 (PFST…ICFF).

This sequence belongs to the UPF0266 family.

The protein localises to the cell membrane. The sequence is that of UPF0266 membrane protein lin0773 from Listeria innocua serovar 6a (strain ATCC BAA-680 / CLIP 11262).